Consider the following 352-residue polypeptide: Ion-translocating oxidoreductase complex subunit D (352 aa).

Helical transmembrane passes span 20-40 (IMLLVLLAAVPGIAAQLWFFG), 42-62 (GTLVQILLASVSALLAEALVL), 89-109 (IPPLAPWWMVVLGTVFAVIIA), and 123-143 (PAMIGYVVLLISFPVQMTSWL). At T187 the chain carries FMN phosphoryl threonine. A run of 5 helical transmembrane segments spans residues 214–234 (ILAGAGWQWVNLAWLAGGVWL), 242–262 (WHVPLSFLVTLALCATLGWLF), 267–287 (LAAPQIHLLSGATMLGAFFIL), 301–321 (LIFGALAGLLVWMIRSFGGYP), and 322–342 (DGVAFAVLLANITVPLIDYYT).

It belongs to the NqrB/RnfD family. The complex is composed of six subunits: RsxA, RsxB, RsxC, RsxD, RsxE and RsxG. Requires FMN as cofactor.

It is found in the cell inner membrane. In terms of biological role, part of a membrane-bound complex that couples electron transfer with translocation of ions across the membrane. Required to maintain the reduced state of SoxR. The polypeptide is Ion-translocating oxidoreductase complex subunit D (Escherichia coli (strain UTI89 / UPEC)).